Reading from the N-terminus, the 381-residue chain is MEKKPKGTRTGYTTGACSAAAARAATLGLVRGRVPDQVECELPNGQRVVFAVTDGRCEGATAHAVVIKDAGDDPDVTDKARLTADVALLPEAVGAVVLKGGEGVGTITRQGLGLEVGGPAINPVPRRNIEANVREAAGDLLERAGLEVVISVPGGEEIAKRTLNYRLGIVGGISILGTTGIVHPYSTAAFRASVIQAIEVAANQGQDVVVLTTGGRTERFVMNELPQLPPVCFVQMGDFLKYALDTVVRCGLRHVVIGGMVGKLTKIAQGETITHANRNAVDTDLLADIAAEVGAPAEVCADIRNSAMARYASERMEDLGLITAFYEALGRRVIRTLRERYPDRFTLRILMCDFEANKLAEVAEEDSPGLRLSSPLPRGED.

This sequence belongs to the CbiD family.

The enzyme catalyses Co-precorrin-5B + S-adenosyl-L-methionine = Co-precorrin-6A + S-adenosyl-L-homocysteine. The protein operates within cofactor biosynthesis; adenosylcobalamin biosynthesis; cob(II)yrinate a,c-diamide from sirohydrochlorin (anaerobic route): step 6/10. Its function is as follows. Catalyzes the methylation of C-1 in cobalt-precorrin-5B to form cobalt-precorrin-6A. In Methylococcus capsulatus (strain ATCC 33009 / NCIMB 11132 / Bath), this protein is Cobalt-precorrin-5B C(1)-methyltransferase.